We begin with the raw amino-acid sequence, 186 residues long: Peptidyl-tRNA hydrolase (186 aa).

Tyrosine 14 contributes to the tRNA binding site. The active-site Proton acceptor is histidine 19. Residues tyrosine 61, asparagine 63, and asparagine 107 each contribute to the tRNA site.

The protein belongs to the PTH family. As to quaternary structure, monomer.

It is found in the cytoplasm. It catalyses the reaction an N-acyl-L-alpha-aminoacyl-tRNA + H2O = an N-acyl-L-amino acid + a tRNA + H(+). In terms of biological role, hydrolyzes ribosome-free peptidyl-tRNAs (with 1 or more amino acids incorporated), which drop off the ribosome during protein synthesis, or as a result of ribosome stalling. Its function is as follows. Catalyzes the release of premature peptidyl moieties from peptidyl-tRNA molecules trapped in stalled 50S ribosomal subunits, and thus maintains levels of free tRNAs and 50S ribosomes. This Helicobacter pylori (strain P12) protein is Peptidyl-tRNA hydrolase.